The sequence spans 247 residues: Phosphoribosylaminoimidazole-succinocarboxamide synthase (247 aa).

The protein belongs to the SAICAR synthetase family.

The catalysed reaction is 5-amino-1-(5-phospho-D-ribosyl)imidazole-4-carboxylate + L-aspartate + ATP = (2S)-2-[5-amino-1-(5-phospho-beta-D-ribosyl)imidazole-4-carboxamido]succinate + ADP + phosphate + 2 H(+). The protein operates within purine metabolism; IMP biosynthesis via de novo pathway; 5-amino-1-(5-phospho-D-ribosyl)imidazole-4-carboxamide from 5-amino-1-(5-phospho-D-ribosyl)imidazole-4-carboxylate: step 1/2. This chain is Phosphoribosylaminoimidazole-succinocarboxamide synthase, found in Methanopyrus kandleri (strain AV19 / DSM 6324 / JCM 9639 / NBRC 100938).